The following is a 343-amino-acid chain: GTP 3',8-cyclase (343 aa).

The Radical SAM core domain occupies 19 to 244; the sequence is PFGRNISYLR…TDLDDSTGGP (226 aa). GTP is bound at residue Arg28. Positions 35 and 39 each coordinate [4Fe-4S] cluster. Tyr41 contacts S-adenosyl-L-methionine. Residue Cys42 participates in [4Fe-4S] cluster binding. Arg77 provides a ligand contact to GTP. Gly81 provides a ligand contact to S-adenosyl-L-methionine. Thr111 is a binding site for GTP. S-adenosyl-L-methionine is bound at residue Ser135. Lys171 is a GTP binding site. Met205 lines the S-adenosyl-L-methionine pocket. The [4Fe-4S] cluster site is built by Cys268 and Cys271. GTP is bound at residue 273–275; it reads RVR. Cys285 is a binding site for [4Fe-4S] cluster.

This sequence belongs to the radical SAM superfamily. MoaA family. Monomer and homodimer. [4Fe-4S] cluster serves as cofactor.

It carries out the reaction GTP + AH2 + S-adenosyl-L-methionine = (8S)-3',8-cyclo-7,8-dihydroguanosine 5'-triphosphate + 5'-deoxyadenosine + L-methionine + A + H(+). Its pathway is cofactor biosynthesis; molybdopterin biosynthesis. Its function is as follows. Catalyzes the cyclization of GTP to (8S)-3',8-cyclo-7,8-dihydroguanosine 5'-triphosphate. This Nitrobacter winogradskyi (strain ATCC 25391 / DSM 10237 / CIP 104748 / NCIMB 11846 / Nb-255) protein is GTP 3',8-cyclase.